The following is a 418-amino-acid chain: Alpha-tubulin N-acetyltransferase 1 (418 aa).

Residues 1-186 enclose the N-acetyltransferase domain; sequence MEFEFDVHKI…NNFVVFEGFF (186 aa). Residues 120–133 and 156–165 each bind acetyl-CoA; these read FYIH…GFGK and SEKFLSFLRK. 2 disordered regions span residues 237-292 and 322-353; these read SSLG…MNLS and QIKE…HQND. Residues 277–287 show a composition bias toward basic and acidic residues; it reads QEDHSQRRRTS. Polar residues predominate over residues 329-353; sequence RTDSSAQEGRTQDRPNGSNSQHQND.

This sequence belongs to the acetyltransferase ATAT1 family.

The protein localises to the cytoplasm. It is found in the membrane. Its subcellular location is the clathrin-coated pit. It localises to the cell junction. The protein resides in the focal adhesion. The protein localises to the cell projection. It is found in the axon. Its subcellular location is the cytoskeleton. It localises to the spindle. It catalyses the reaction L-lysyl-[alpha-tubulin] + acetyl-CoA = N(6)-acetyl-L-lysyl-[alpha-tubulin] + CoA + H(+). Functionally, specifically acetylates 'Lys-40' in alpha-tubulin on the lumenal side of microtubules. Promotes microtubule destabilization and accelerates microtubule dynamics; this activity may be independent of acetylation activity. Acetylates alpha-tubulin with a slow enzymatic rate, due to a catalytic site that is not optimized for acetyl transfer. Enters the microtubule through each end and diffuses quickly throughout the lumen of microtubules. Acetylates only long/old microtubules because of its slow acetylation rate since it does not have time to act on dynamically unstable microtubules before the enzyme is released. May be involved in neuron development. This chain is Alpha-tubulin N-acetyltransferase 1, found in Xenopus laevis (African clawed frog).